The primary structure comprises 83 residues: Short neurotoxin II (83 aa).

The signal sequence occupies residues 1 to 21 (MKTLLLTLVVVTVVCLDLGYT). 4 cysteine pairs are disulfide-bonded: Cys24/Cys45, Cys38/Cys62, Cys64/Cys75, and Cys76/Cys81.

The protein belongs to the three-finger toxin family. Short-chain subfamily. Type I alpha-neurotoxin sub-subfamily. Expressed by the venom gland.

Its subcellular location is the secreted. Binds to muscle nicotinic acetylcholine receptor (nAChR) and inhibit acetylcholine from binding to the receptor, thereby impairing neuromuscular transmission. The chain is Short neurotoxin II from Laticauda colubrina (Yellow-lipped sea krait).